We begin with the raw amino-acid sequence, 198 residues long: Nucleoside triphosphate pyrophosphatase (198 aa).

D74 serves as the catalytic Proton acceptor.

The protein belongs to the Maf family. It depends on a divalent metal cation as a cofactor.

Its subcellular location is the cytoplasm. It carries out the reaction a ribonucleoside 5'-triphosphate + H2O = a ribonucleoside 5'-phosphate + diphosphate + H(+). The catalysed reaction is a 2'-deoxyribonucleoside 5'-triphosphate + H2O = a 2'-deoxyribonucleoside 5'-phosphate + diphosphate + H(+). Functionally, nucleoside triphosphate pyrophosphatase. May have a dual role in cell division arrest and in preventing the incorporation of modified nucleotides into cellular nucleic acids. The protein is Nucleoside triphosphate pyrophosphatase of Sphingopyxis alaskensis (strain DSM 13593 / LMG 18877 / RB2256) (Sphingomonas alaskensis).